Here is a 266-residue protein sequence, read N- to C-terminus: Indole-3-glycerol phosphate synthase (266 aa).

The protein belongs to the TrpC family.

The catalysed reaction is 1-(2-carboxyphenylamino)-1-deoxy-D-ribulose 5-phosphate + H(+) = (1S,2R)-1-C-(indol-3-yl)glycerol 3-phosphate + CO2 + H2O. The protein operates within amino-acid biosynthesis; L-tryptophan biosynthesis; L-tryptophan from chorismate: step 4/5. The chain is Indole-3-glycerol phosphate synthase from Janthinobacterium sp. (strain Marseille) (Minibacterium massiliensis).